Here is a 457-residue protein sequence, read N- to C-terminus: MDINPPPSTAPSSPRRSIQRISDAKNKALTFNRRRLGLIKKAHELSVLCDAKVVVMIFDSKNACHVYSSEEPEEQRDALLQKFLNKDFVTVDPLRNINPNIPSDESLHNWRPKDKRIASVTTYSAQPSNNCSSATDSENDFQSFTIKSSTTYHTTPTTASENKKIESITIPDHASVYNDLPLSPTVKHSFVSPVSGDYSDSPLEPSSSSSFSVPPESLNPTLSFQHNDVPQTDNFIPFLTPKRQAYGQSSSRADRSSVRRSQSFKNRRNGKPRISRLHTSHASIDGLTDFIQSPSSGYLDPSSTPITPLDSAINQITPPFLPDNLGQENRGELYSHDNPTSMVYEHPKFDELPNGFIDTHELNILSRSFTASPNQILRESNMVNQDSFTDNPVDATWDALIGTTQIDLDLDYERSSIPSSTIPADQLKDGVPTNSVYRNNMVDHNLYPSLNIERNAP.

The region spanning 11 to 71 (PSSPRRSIQR…NACHVYSSEE (61 aa)) is the MADS-box domain. Disordered stretches follow at residues 195–278 (SGDY…SRLH) and 295–328 (SSGYLDPSSTPITPLDSAINQITPPFLPDNLGQE). The segment covering 199–216 (SDSPLEPSSSSSFSVPPE) has biased composition (low complexity). Polar residues predominate over residues 218–234 (LNPTLSFQHNDVPQTDN). Residues 265 to 278 (KNRRNGKPRISRLH) are compositionally biased toward basic residues. Residues 295-317 (SSGYLDPSSTPITPLDSAINQIT) are compositionally biased toward polar residues. Ser-372 carries the phosphoserine modification.

In terms of processing, phosphorylated. Occurs periodically during mitosis.

Its subcellular location is the nucleus. In terms of biological role, acts as a transcriptional activator with a role in the regulation of mitosis. Regulates septation and the periodic transcription of cdc15. The sequence is that of MADS-box transcription factor 1 (mbx1) from Schizosaccharomyces pombe (strain 972 / ATCC 24843) (Fission yeast).